Consider the following 165-residue polypeptide: Cyclic pyranopterin monophosphate synthase (165 aa).

Substrate contacts are provided by residues 83 to 85 (FCH) and 120 to 121 (ME). Residue Asp-135 is part of the active site.

Belongs to the MoaC family. In terms of assembly, homohexamer; trimer of dimers.

It carries out the reaction (8S)-3',8-cyclo-7,8-dihydroguanosine 5'-triphosphate = cyclic pyranopterin phosphate + diphosphate. The protein operates within cofactor biosynthesis; molybdopterin biosynthesis. Functionally, catalyzes the conversion of (8S)-3',8-cyclo-7,8-dihydroguanosine 5'-triphosphate to cyclic pyranopterin monophosphate (cPMP). This chain is Cyclic pyranopterin monophosphate synthase, found in Xanthomonas oryzae pv. oryzae (strain MAFF 311018).